The sequence spans 259 residues: 5'-nucleotidase SurE (259 aa).

D8, D9, S41, and N93 together coordinate a divalent metal cation.

It belongs to the SurE nucleotidase family. It depends on a divalent metal cation as a cofactor.

The protein localises to the cytoplasm. The enzyme catalyses a ribonucleoside 5'-phosphate + H2O = a ribonucleoside + phosphate. Functionally, nucleotidase that shows phosphatase activity on nucleoside 5'-monophosphates. The protein is 5'-nucleotidase SurE of Verminephrobacter eiseniae (strain EF01-2).